The chain runs to 256 residues: Type III pantothenate kinase (256 aa).

6–13 (DCGNTNTV) serves as a coordination point for ATP. 107–110 (GPDR) is a substrate binding site. The active-site Proton acceptor is the D109. Residue D129 participates in K(+) binding. T132 is a binding site for ATP. T184 lines the substrate pocket.

Belongs to the type III pantothenate kinase family. Homodimer. The cofactor is NH4(+). K(+) serves as cofactor.

The protein resides in the cytoplasm. The catalysed reaction is (R)-pantothenate + ATP = (R)-4'-phosphopantothenate + ADP + H(+). Its pathway is cofactor biosynthesis; coenzyme A biosynthesis; CoA from (R)-pantothenate: step 1/5. Functionally, catalyzes the phosphorylation of pantothenate (Pan), the first step in CoA biosynthesis. The protein is Type III pantothenate kinase of Dinoroseobacter shibae (strain DSM 16493 / NCIMB 14021 / DFL 12).